Consider the following 483-residue polypeptide: Cytochrome P450 71A23 (483 aa).

A helical transmembrane segment spans residues M1–H21. C429 provides a ligand contact to heme.

Belongs to the cytochrome P450 family. Heme is required as a cofactor.

The protein localises to the membrane. This Arabidopsis thaliana (Mouse-ear cress) protein is Cytochrome P450 71A23 (CYP71A23).